The following is a 265-amino-acid chain: Small ribosomal subunit protein uS5 (265 aa).

Over residues 1 to 25 (MADTTTAAQADQKPTRAFGAGRPQR) the composition is skewed to low complexity. The disordered stretch occupies residues 1-49 (MADTTTAAQADQKPTRAFGAGRPQRGAGGAPQRGGPRPQRGGQGETKSW). Alanine 2 is modified (N-acetylalanine). The 64-residue stretch at 89–152 (LKDEVMKIVP…VAAKLSVIPV (64 aa)) folds into the S5 DRBM domain.

It belongs to the universal ribosomal protein uS5 family.

Component of the ribosome, a large ribonucleoprotein complex responsible for the synthesis of proteins in the cell. The small ribosomal subunit (SSU) binds messenger RNAs (mRNAs) and translates the encoded message by selecting cognate aminoacyl-transfer RNA (tRNA) molecules. The large subunit (LSU) contains the ribosomal catalytic site termed the peptidyl transferase center (PTC), which catalyzes the formation of peptide bonds, thereby polymerizing the amino acids delivered by tRNAs into a polypeptide chain. The nascent polypeptides leave the ribosome through a tunnel in the LSU and interact with protein factors that function in enzymatic processing, targeting, and the membrane insertion of nascent chains at the exit of the ribosomal tunnel. Plays a role in the assembly and function of the 40S ribosomal subunit. Mutations in this protein affects the control of translational fidelity. Involved in nucleolar processing of pre-18S ribosomal RNA and ribosome assembly. This is Small ribosomal subunit protein uS5 (rps2) from Dictyostelium discoideum (Social amoeba).